The primary structure comprises 465 residues: uncharacterized protein (465 aa).

3 disordered regions span residues 95–173 (STST…RKDP), 407–426 (QEME…KSDK), and 443–465 (ANPI…SSKK). The span at 118–137 (KTGSKKVTRSKKSKKTKRRS) shows a compositional bias: basic residues. Residues 138-150 (STTVTTTTISNSK) are compositionally biased toward low complexity. Basic and acidic residues predominate over residues 153 to 173 (TPDKDKDSKDQRKQRTKRKDP). The span at 451–465 (MARRNRRSKGSSSKK) shows a compositional bias: basic residues.

This is an uncharacterized protein from Caenorhabditis elegans.